Reading from the N-terminus, the 513-residue chain is MQLNSTEIAELIKQRIAQFDVKSEARNEGTIVSVSDGIIRIHGLADAMQGEMIELPGNRFALALNLERDSVGAVIMGSYDGLSEGMKVKGTGRILEVPVGRGLLGRVLNTLGQPIDGKGPVENDGFSPIEVIAPGVIERKSVDQPVQTGLKAIDAMIPIGRGQRELIIGDRQVGKTAIAIDTIINQKDSGIKCVYVAIGQKASTIANVVRKLEEHGALANTIVVVASASEAAALQYLAPYAGCSMGEYFRDRGEDALIIYDDLSKQAVAYRQISLLLRRPPGREAYPGDVFYLHSRLLERAARVNAEYVEKFTNGAVKGQTGSLTALPIIETQAGDVSAFVPTNVISITDGQIFLTSQLFNSGIRPAVDPGISVSRVGGAAQTKIVKKLSGGIRTALAQYRELAAFAQFSSDLDEATRKQLDHGVKVTELMKQKQYSPMSVAQQSLVLFAAEKGYLSDVELNKIVDFEAALLSYANTQHAELMAEINAKADYNDAIVGKLTALLDDFKATQTW.

169 to 176 (GDRQVGKT) serves as a coordination point for ATP.

It belongs to the ATPase alpha/beta chains family. F-type ATPases have 2 components, CF(1) - the catalytic core - and CF(0) - the membrane proton channel. CF(1) has five subunits: alpha(3), beta(3), gamma(1), delta(1), epsilon(1). CF(0) has three main subunits: a(1), b(2) and c(9-12). The alpha and beta chains form an alternating ring which encloses part of the gamma chain. CF(1) is attached to CF(0) by a central stalk formed by the gamma and epsilon chains, while a peripheral stalk is formed by the delta and b chains.

Its subcellular location is the cell inner membrane. It catalyses the reaction ATP + H2O + 4 H(+)(in) = ADP + phosphate + 5 H(+)(out). Its function is as follows. Produces ATP from ADP in the presence of a proton gradient across the membrane. The alpha chain is a regulatory subunit. The sequence is that of ATP synthase subunit alpha from Aeromonas salmonicida (strain A449).